Consider the following 147-residue polypeptide: Methylated-DNA--protein-cysteine methyltransferase (147 aa).

Catalysis depends on C112, which acts as the Nucleophile; methyl group acceptor.

The protein belongs to the MGMT family.

Its subcellular location is the cytoplasm. The enzyme catalyses a 6-O-methyl-2'-deoxyguanosine in DNA + L-cysteinyl-[protein] = S-methyl-L-cysteinyl-[protein] + a 2'-deoxyguanosine in DNA. It carries out the reaction a 4-O-methyl-thymidine in DNA + L-cysteinyl-[protein] = a thymidine in DNA + S-methyl-L-cysteinyl-[protein]. Involved in the cellular defense against the biological effects of O6-methylguanine (O6-MeG) and O4-methylthymine (O4-MeT) in DNA. Repairs the methylated nucleobase in DNA by stoichiometrically transferring the methyl group to a cysteine residue in the enzyme. This is a suicide reaction: the enzyme is irreversibly inactivated. This is Methylated-DNA--protein-cysteine methyltransferase from Archaeoglobus fulgidus (strain ATCC 49558 / DSM 4304 / JCM 9628 / NBRC 100126 / VC-16).